Consider the following 288-residue polypeptide: Putative sugar uptake protein gbs2116 (288 aa).

Helical transmembrane passes span 4–26 (LLIA…KIGG), 33–50 (FGMT…WLFK), 55–72 (TASL…WSVG), 85–107 (VSVA…GALV), 117–134 (FILG…FYFS), 154–171 (FATI…AVLF), 181–200 (AVIL…FMKF), 207–229 (VVVK…LLAA), 234–256 (LAIA…ILFL), and 268–285 (VVMG…LGIV).

It belongs to the GRP transporter (TC 2.A.7.5) family.

Its subcellular location is the cell membrane. This chain is Putative sugar uptake protein gbs2116, found in Streptococcus agalactiae serotype III (strain NEM316).